Consider the following 476-residue polypeptide: RNA-binding protein 45 (476 aa).

Positions 1–14 are enriched in gly residues; that stretch reads MDDAGGLGGSGGFR. A disordered region spans residues 1-20; it reads MDDAGGLGGSGGFRPGVDSL. RRM domains lie at 26 to 106 and 121 to 192; these read SRIF…IAQS and TRIF…LAEP. Residue K34 forms a Glycyl lysine isopeptide (Lys-Gly) (interchain with G-Cter in SUMO2) linkage. A disordered region spans residues 192-212; it reads PKNKVSGSPEQDDYSSGRQEA. Positions 196 to 209 are enriched in polar residues; sequence VSGSPEQDDYSSGR. 2 positions are modified to phosphoserine: S199 and S464. The 73-residue stretch at 392-464 folds into the RRM 3 domain; the sequence is ERLFVVFNPH…VRLKVMLADS (73 aa).

The protein localises to the cytoplasm. The protein resides in the nucleus. Functionally, RNA-binding protein with binding specificity for poly(C). May play an important role in neural development. This is RNA-binding protein 45 (Rbm45) from Mus musculus (Mouse).